The primary structure comprises 545 residues: Chaperonin GroEL 3 (545 aa).

Residues 29–32, 86–90, Gly-413, 479–481, and Asp-495 each bind ATP; these read TLGP, DGTTT, and DAV. Residues 526–545 form a disordered region; the sequence is DKQAKAPAGVGPGPGEGFDY. Residues 535–545 are compositionally biased toward gly residues; the sequence is VGPGPGEGFDY.

Belongs to the chaperonin (HSP60) family. As to quaternary structure, forms a cylinder of 14 subunits composed of two heptameric rings stacked back-to-back. Interacts with the co-chaperonin GroES.

Its subcellular location is the cytoplasm. It catalyses the reaction ATP + H2O + a folded polypeptide = ADP + phosphate + an unfolded polypeptide.. Together with its co-chaperonin GroES, plays an essential role in assisting protein folding. The GroEL-GroES system forms a nano-cage that allows encapsulation of the non-native substrate proteins and provides a physical environment optimized to promote and accelerate protein folding. This Trichormus variabilis (strain ATCC 29413 / PCC 7937) (Anabaena variabilis) protein is Chaperonin GroEL 3.